Here is a 632-residue protein sequence, read N- to C-terminus: MTQSTTSHYFVESPSTRALVLGAVGVVFGDIGTSPLYALKECFSKEHGIMFSPEAVLGVISMLFWAMIIVVSIKYVVFVMRADNDGEGGVLALMALVLRTVAPRSGRARVLMMLGIFGACMFYGDAVITPAISVLSAVEGLEIAAPQLSQFVIPITLMILAALFLIQRHGTATMGKLFGPIMTAWFLALGGLGILHLVQAPEILKAINPYYAITFLVEHALQAFIVLGSVFLVLTGAEALYVDMGHFGARPIRIGWFVLVMPCLMLNYFGQGAMLLHNPAGAENPFYLMVPDLLQIPMVLLATCATVIASQAVISGAFSLTSQAIQLGFLPRMRVRYTSAAEIGQIYLPVINWLLLVLVIGVVISFKKSENLAAAYGIAVTTTMVITTILAAVCMRSVWKWNPALVAVVGLAFIVVDLSFFAANLLKVAEGGWFPLLLGSAAFFLLMTWYSGRKLLRARSLEDGIPLEPFIAGLLAHPPHRVEGTAVFLTGNTESVPVSLLHNLKHNRVLHERVVFLTFVTRDIPYVDDDHRLSCKDVGGGVFILKSEYGFKETPDVQRVLDLADRKLGMHFELMETSFFIARESVIPSKLPGMPMWRESLFAWMHQNGAKPSDFFQIPANRVVELGTKVEI.

Transmembrane regions (helical) follow at residues 19–39 (LVLG…LYAL), 59–79 (VISM…VVFV), 110–130 (VLMM…VITP), 146–166 (PQLS…LFLI), 178–198 (FGPI…LHLV), 213–233 (ITFL…VFLV), 256–276 (WFVL…AMLL), 298–318 (MVLL…SGAF), 346–366 (IYLP…VISF), 373–393 (AAAY…LAAV), 403–423 (PALV…FFAA), and 428–448 (VAEG…LLMT).

This sequence belongs to the HAK/KUP transporter (TC 2.A.72) family.

The protein resides in the cell inner membrane. It carries out the reaction K(+)(in) + H(+)(in) = K(+)(out) + H(+)(out). In terms of biological role, transport of potassium into the cell. Likely operates as a K(+):H(+) symporter. This is Probable potassium transport system protein Kup 1 from Cupriavidus necator (strain ATCC 17699 / DSM 428 / KCTC 22496 / NCIMB 10442 / H16 / Stanier 337) (Ralstonia eutropha).